Reading from the N-terminus, the 188-residue chain is Elongation factor P (188 aa).

It belongs to the elongation factor P family.

The protein resides in the cytoplasm. The protein operates within protein biosynthesis; polypeptide chain elongation. Involved in peptide bond synthesis. Stimulates efficient translation and peptide-bond synthesis on native or reconstituted 70S ribosomes in vitro. Probably functions indirectly by altering the affinity of the ribosome for aminoacyl-tRNA, thus increasing their reactivity as acceptors for peptidyl transferase. The chain is Elongation factor P from Parabacteroides distasonis (strain ATCC 8503 / DSM 20701 / CIP 104284 / JCM 5825 / NCTC 11152).